We begin with the raw amino-acid sequence, 481 residues long: Phosphatidylinositol 4-kinase type 2-beta (481 aa).

Residues 1 to 11 are compositionally biased toward basic and acidic residues; it reads MEDPSEPDRLA. The disordered stretch occupies residues 1–82; it reads MEDPSEPDRL…VSRSSSAELD (82 aa). Ser12, Ser17, and Ser45 each carry phosphoserine. Over residues 53-64 the composition is skewed to acidic residues; it reads AGEEGEAGDEEL. Residues 120-451 form the PI3K/PI4K catalytic domain; sequence GIFPERISQG…VQIPCVIVER (332 aa). The G-loop stretch occupies residues 126-132; that stretch reads ISQGSSG. ATP is bound by residues Ser133 and Lys148. An important for substrate binding region spans residues 153–155; the sequence is EPY. The segment at 161 to 174 is important for interaction with membranes; the sequence is KWTKYVHKVCCPCC. Residues 257–260 and 271–272 each bind ATP; these read QLFV and RK. Residues 264–272 are important for interaction with membranes; the sequence is KEAEYWLRK. The segment at 301 to 309 is catalytic loop; that stretch reads RNTDRGNDN. Residues 342-362 form an activation loop region; that stretch reads AIDNGLAFPFKHPDEWRAYPF. Asp344 is a binding site for ATP. The tract at residues 357 to 366 is important for interaction with membranes; sequence WRAYPFHWAW.

This sequence belongs to the PI3/PI4-kinase family. Type II PI4K subfamily. Widely expressed.

It is found in the cytoplasm. Its subcellular location is the cytosol. The protein localises to the golgi apparatus membrane. It localises to the endoplasmic reticulum membrane. The protein resides in the cell membrane. It is found in the early endosome membrane. It carries out the reaction a 1,2-diacyl-sn-glycero-3-phospho-(1D-myo-inositol) + ATP = a 1,2-diacyl-sn-glycero-3-phospho-(1D-myo-inositol 4-phosphate) + ADP + H(+). With respect to regulation, inhibited by phenylarsine oxide and adenosine. Activation through membrane association is stimulated by active RAC1. Together with PI4K2A and the type III PI4Ks (PIK4CA and PIK4CB) it contributes to the overall PI4-kinase activity of the cell. This contribution may be especially significant in plasma membrane, endosomal and Golgi compartments. The phosphorylation of phosphatidylinositol (PI) to PI4P is the first committed step in the generation of phosphatidylinositol 4,5-bisphosphate (PIP2), a precursor of the second messenger inositol 1,4,5-trisphosphate (InsP3). Contributes to the production of InsP3 in stimulated cells and is likely to be involved in the regulation of vesicular trafficking. The chain is Phosphatidylinositol 4-kinase type 2-beta (PI4K2B) from Homo sapiens (Human).